The sequence spans 593 residues: Uncoordinated protein 58 (593 aa).

6 consecutive transmembrane segments (helical) span residues 186-206 (VILVSVLIGYLCLGAWILMLL), 291-311 (TFPTALLYVLTVLTTCGYGEV), 320-340 (VFSVAFALVGIPLMFITAADI), 402-422 (PIGAYVSCICLYCSMGSAMFI), 430-450 (FIHAFHFGFNLIVTVGLGDIV), and 455-475 (IFLSLIVAFVIVGLSVVTMCV).

This sequence belongs to the two pore domain potassium channel (TC 1.A.1.8) family.

Its subcellular location is the membrane. Functionally, has a role in mobility, possibly in the transport of potassium in muscles. This is Uncoordinated protein 58 from Caenorhabditis briggsae.